A 358-amino-acid polypeptide reads, in one-letter code: Molybdenum import ATP-binding protein ModC (358 aa).

An ABC transporter domain is found at 2-234 (NDDISASFFS…PDLPLAHLEE (233 aa)). 34–41 (GRSGSGKT) lines the ATP pocket. The 66-residue stretch at 293–358 (LSSISNCIPV…AQVKSVALID (66 aa)) folds into the Mop domain.

Belongs to the ABC transporter superfamily. Molybdate importer (TC 3.A.1.8) family. The complex is composed of two ATP-binding proteins (ModC), two transmembrane proteins (ModB) and a solute-binding protein (ModA).

Its subcellular location is the cell inner membrane. It catalyses the reaction molybdate(out) + ATP + H2O = molybdate(in) + ADP + phosphate + H(+). Functionally, part of the ABC transporter complex ModABC involved in molybdenum import. Responsible for energy coupling to the transport system. This chain is Molybdenum import ATP-binding protein ModC, found in Hahella chejuensis (strain KCTC 2396).